The primary structure comprises 251 residues: PF03932 family protein CutC (251 aa).

This sequence belongs to the CutC family.

It is found in the cytoplasm. The sequence is that of PF03932 family protein CutC from Agrobacterium fabrum (strain C58 / ATCC 33970) (Agrobacterium tumefaciens (strain C58)).